The chain runs to 104 residues: Large ribosomal subunit protein bL21 (104 aa).

The protein belongs to the bacterial ribosomal protein bL21 family. Part of the 50S ribosomal subunit. Contacts protein L20.

This protein binds to 23S rRNA in the presence of protein L20. In Clostridium botulinum (strain Kyoto / Type A2), this protein is Large ribosomal subunit protein bL21.